Reading from the N-terminus, the 178-residue chain is Fimbrial adapter PapK (178 aa).

The signal sequence occupies residues 1–21 (MIKSTGALLLFAALSAGQAIA).

The protein resides in the secreted. It localises to the fimbrium. Adapter that links the pilus rod to the base of the tip fibrillum. Regulates the length of the tip fibrillum and joins it to the pilus rod. Pili are polar filaments radiating from the surface of the bacterium to a length of 0.5-1.5 micrometers and numbering 100-300 per cell, and enable bacteria to colonize the epithelium of specific host organs. This is Fimbrial adapter PapK (papK) from Escherichia coli O6:H1 (strain CFT073 / ATCC 700928 / UPEC).